A 37-amino-acid polypeptide reads, in one-letter code: Large ribosomal subunit protein bL36c (37 aa).

It belongs to the bacterial ribosomal protein bL36 family.

It is found in the plastid. The protein is Large ribosomal subunit protein bL36c of Cuscuta gronovii (Common dodder).